A 546-amino-acid chain; its full sequence is E3 ubiquitin-protein ligase NEURL1B (546 aa).

Residues 38 to 194 (APRFHAQAKG…ITDEVQLLES (157 aa)) enclose the NHR 1 domain. At T199 the chain carries Phosphothreonine. The region spanning 270–424 (ELRFHATRGP…GVAGQLRLLG (155 aa)) is the NHR 2 domain. Residues 429-490 (SSETMTPSGS…FSAPEPTGSR (62 aa)) are disordered. A compositionally biased stretch (low complexity) spans 457–471 (SSSASESSLVTAPSS). The segment at 494–534 (CTVCFDSEVDTVIYTCGHMCLCHGCGLRLRRQARACCPICR) adopts an RING-type zinc-finger fold.

In terms of assembly, interacts with DLL1 and DLL4. As to expression, expressed in the limb buds and dorsal root ganglia. Expressed in brain and kidney and at low levels in the heart.

Its subcellular location is the cytoplasm. The enzyme catalyses S-ubiquitinyl-[E2 ubiquitin-conjugating enzyme]-L-cysteine + [acceptor protein]-L-lysine = [E2 ubiquitin-conjugating enzyme]-L-cysteine + N(6)-ubiquitinyl-[acceptor protein]-L-lysine.. Its pathway is protein modification; protein ubiquitination. Functionally, E3 ubiquitin-protein ligase involved in regulation of the Notch pathway through influencing the stability and activity of several Notch ligands. This is E3 ubiquitin-protein ligase NEURL1B (Neurl1b) from Mus musculus (Mouse).